Reading from the N-terminus, the 480-residue chain is Glycogen synthase (480 aa).

Lysine 15 serves as a coordination point for ADP-alpha-D-glucose.

Belongs to the glycosyltransferase 1 family. Bacterial/plant glycogen synthase subfamily.

It catalyses the reaction [(1-&gt;4)-alpha-D-glucosyl](n) + ADP-alpha-D-glucose = [(1-&gt;4)-alpha-D-glucosyl](n+1) + ADP + H(+). It participates in glycan biosynthesis; glycogen biosynthesis. In terms of biological role, synthesizes alpha-1,4-glucan chains using ADP-glucose. In Rhizobium tropici, this protein is Glycogen synthase.